Here is a 59-residue protein sequence, read N- to C-terminus: Large ribosomal subunit protein bL32 (59 aa).

Positions 1 to 59 (MAVQQNKKSPSKRGMHRAHDFLTTPPLAVESTTGEAHLRHHISPAGFYRGKKVTKGKGE) are disordered. Residues 49–59 (RGKKVTKGKGE) show a composition bias toward basic residues.

Belongs to the bacterial ribosomal protein bL32 family.

This is Large ribosomal subunit protein bL32 from Dechloromonas aromatica (strain RCB).